Here is a 115-residue protein sequence, read N- to C-terminus: MSYEYDDELEEIRRRKMLELQRRLEEERRREEEQARLRAQKDAILRRLLTSKARERLANLRLVRPEIAEAAENAVIQLVQTGRITPPVDDDTLVQILLELDRSTRRDFEIRIKRK.

This sequence belongs to the PDCD5 family.

In Aeropyrum pernix (strain ATCC 700893 / DSM 11879 / JCM 9820 / NBRC 100138 / K1), this protein is DNA-binding protein APE_1087b.